The following is a 441-amino-acid chain: 5-hydroxytryptamine receptor 3B (441 aa).

An N-terminal signal peptide occupies residues 1–21 (MLSSVMAPLWACILVAAGILA). At 22–238 (TDTHHPQDSA…IQFNVVMRRH (217 aa)) the chain is on the extracellular side. N-linked (GlcNAc...) asparagine glycans are attached at residues Asn52, Asn96, Asn138, Asn168, and Asn203. Cysteines 155 and 169 form a disulfide. A helical membrane pass occupies residues 239–259 (PLVYVVSLLIPSIFLMLVDLG). Over 260 to 268 (SFYLPPNCR) the chain is Cytoplasmic. A helical membrane pass occupies residues 269–286 (ARIVFKTSVLVGYTVFRV). A glycan (N-linked (GlcNAc...) asparagine) is linked at Asn287. Residues 287-303 (NMSNQVPRSVGSTPLIG) lie on the Extracellular side of the membrane. Residues 304–324 (HFFTICMAFLVLSLAKSIVLV) traverse the membrane as a helical segment. Over 325 to 414 (KFLHDEQRGG…WLVLLSRFDR (90 aa)) the chain is Cytoplasmic. The tract at residues 381-413 (VWSQLQSISNYLQTQDQTDQQEAEWLVLLSRFD) is HA-stretch; determines single-channel conductance in 5-HT3 receptors. Residues 415 to 435 (LLFQSYLFMLGIYTITLCSLW) form a helical membrane-spanning segment. Residues 436-441 (ALWGGV) are Extracellular-facing.

Belongs to the ligand-gated ion channel (TC 1.A.9) family. 5-hydroxytryptamine receptor (TC 1.A.9.2) subfamily. HTR3B sub-subfamily. Forms homopentameric as well as heteropentameric serotonin-activated cation-selective channel complexes with HTR3A. The homomeric complex is not functional. Heteropentameric complexes display properties which resemble that of neuronal serotonin-activated channels in vivo. N-glycosylation required for membrane localization. In terms of tissue distribution, expressed in the brain cortex, in the caudate nucleus, the hippocampus, the thalamus and the amygdala. Detected in the kidney and testis as well as in monocytes of the spleen, small and large intestine, uterus, prostate, ovary and placenta.

The protein resides in the postsynaptic cell membrane. It is found in the cell membrane. It carries out the reaction Na(+)(in) = Na(+)(out). The enzyme catalyses K(+)(in) = K(+)(out). It catalyses the reaction Ca(2+)(in) = Ca(2+)(out). Functionally, forms serotonin (5-hydroxytryptamine/5-HT3)-activated cation-selective channel complexes, which when activated cause fast, depolarizing responses in neurons. The sequence is that of 5-hydroxytryptamine receptor 3B from Homo sapiens (Human).